Reading from the N-terminus, the 246-residue chain is Probable transcriptional regulatory protein Teth39_1009 (246 aa).

Positions 1 to 21 (MSGHSKWANIKHKKEKMDAKK) are disordered.

It belongs to the TACO1 family.

The protein resides in the cytoplasm. The sequence is that of Probable transcriptional regulatory protein Teth39_1009 from Thermoanaerobacter pseudethanolicus (strain ATCC 33223 / 39E) (Clostridium thermohydrosulfuricum).